Reading from the N-terminus, the 505-residue chain is Sucrose porin (505 aa).

The signal sequence occupies residues 1-22; sequence MYKKRKLAILIALLTGTAAAHG. A disordered region spans residues 44–94; sequence ETRASTAESRAASAEQKVQQLTQQQQQTQATTQQVARRTTQLEEKAERPGG. Residues 46 to 82 are compositionally biased toward low complexity; the sequence is RASTAESRAASAEQKVQQLTQQQQQTQATTQQVARRT. The span at 83–93 shows a compositional bias: basic and acidic residues; sequence TQLEEKAERPG.

The protein belongs to the porin LamB (TC 1.B.3) family. In terms of assembly, homotrimer.

Its subcellular location is the cell outer membrane. In terms of biological role, porin for sucrose uptake. In Klebsiella pneumoniae, this protein is Sucrose porin (scrY).